Here is a 183-residue protein sequence, read N- to C-terminus: Dual-action ribosomal maturation protein DarP (183 aa).

The protein belongs to the DarP family.

The protein localises to the cytoplasm. Member of a network of 50S ribosomal subunit biogenesis factors which assembles along the 30S-50S interface, preventing incorrect 23S rRNA structures from forming. Promotes peptidyl transferase center (PTC) maturation. In Klebsiella pneumoniae (strain 342), this protein is Dual-action ribosomal maturation protein DarP.